Reading from the N-terminus, the 185-residue chain is Disulfide bond formation protein B (185 aa).

Residues 1–25 are Cytoplasmic-facing; sequence MLLFFVILGIFVLTILKAISKQRWS. The helical transmembrane segment at 26 to 42 threads the bilayer; it reads WLLLAASALSLELSALY. The Periplasmic portion of the chain corresponds to 43 to 60; that stretch reads FQHVMQLEPCVMCVYERL. Cys52 and Cys55 form a disulfide bridge. A helical membrane pass occupies residues 61 to 76; it reads AMLGILLAGLIGASSP. The Cytoplasmic portion of the chain corresponds to 77–83; it reads NNVFIRL. A helical membrane pass occupies residues 84 to 101; that stretch reads SAFLLWGISAVWGILLAI. The Periplasmic segment spans residues 102-156; sequence KHTDYQLHPSPFFTCDFFPNFPAWAPLHEWLPWLFNPTGDCSDIVWQFLGYSMPQ. Cysteines 116 and 142 form a disulfide. The helical transmembrane segment at 157–175 threads the bilayer; sequence WLIVSFSLYTLLFIIFAIS. Residues 176 to 185 lie on the Cytoplasmic side of the membrane; it reads AVLKTKKQLF.

This sequence belongs to the DsbB family.

It is found in the cell inner membrane. Required for disulfide bond formation in some periplasmic proteins. Acts by oxidizing the DsbA protein. This chain is Disulfide bond formation protein B, found in Psychromonas ingrahamii (strain DSM 17664 / CCUG 51855 / 37).